The following is a 215-amino-acid chain: MKSSNLYSKLLNAPKNAPVFLSQNLEADFIVKAYTFGLFPWTSKPVTWWCPDPRCILIPNQIHIQKNMKKFINLYQIKLDYDFLKLITLCRDTRSQSWIDDEFITTYYKLFTQGYAHSLELYENNELIGGIYGLILGKVFFGESMVSIKKNASKVAMIKLCDLLKPYDFIIDCQVYNQHLEFMGAHNISRKEFLNILKEKCNQESGFKNFKDLIT.

It belongs to the L/F-transferase family.

It localises to the cytoplasm. The catalysed reaction is N-terminal L-lysyl-[protein] + L-leucyl-tRNA(Leu) = N-terminal L-leucyl-L-lysyl-[protein] + tRNA(Leu) + H(+). It catalyses the reaction N-terminal L-arginyl-[protein] + L-leucyl-tRNA(Leu) = N-terminal L-leucyl-L-arginyl-[protein] + tRNA(Leu) + H(+). It carries out the reaction L-phenylalanyl-tRNA(Phe) + an N-terminal L-alpha-aminoacyl-[protein] = an N-terminal L-phenylalanyl-L-alpha-aminoacyl-[protein] + tRNA(Phe). In terms of biological role, functions in the N-end rule pathway of protein degradation where it conjugates Leu, Phe and, less efficiently, Met from aminoacyl-tRNAs to the N-termini of proteins containing an N-terminal arginine or lysine. This is Leucyl/phenylalanyl-tRNA--protein transferase from Campylobacter jejuni subsp. jejuni serotype O:2 (strain ATCC 700819 / NCTC 11168).